The chain runs to 566 residues: Glucose-6-phosphate isomerase, cytosolic (566 aa).

Catalysis depends on Glu360, which acts as the Proton donor. Active-site residues include His391 and Lys516.

The protein belongs to the GPI family. As to quaternary structure, homodimer.

The protein localises to the cytoplasm. It catalyses the reaction alpha-D-glucose 6-phosphate = beta-D-fructose 6-phosphate. It participates in carbohydrate degradation; glycolysis; D-glyceraldehyde 3-phosphate and glycerone phosphate from D-glucose: step 2/4. The sequence is that of Glucose-6-phosphate isomerase, cytosolic (PGIC) from Spinacia oleracea (Spinach).